We begin with the raw amino-acid sequence, 445 residues long: Enolase (445 aa).

Residues histidine 165 and glutamate 174 each coordinate substrate. Residue glutamate 217 is the Proton donor of the active site. Mg(2+) is bound by residues aspartate 252, glutamate 303, and aspartate 330. Substrate-binding residues include glutamate 303 and aspartate 330. The active-site Proton acceptor is the lysine 355. Residues 382-385 and lysine 406 each bind substrate; that span reads SHRS.

Belongs to the enolase family. As to quaternary structure, homodimer. It depends on Mg(2+) as a cofactor.

Its subcellular location is the cytoplasm. The catalysed reaction is (2R)-2-phosphoglycerate = phosphoenolpyruvate + H2O. It participates in carbohydrate degradation; glycolysis; pyruvate from D-glyceraldehyde 3-phosphate: step 4/5. The protein is Enolase (ENO) of Eimeria tenella (Coccidian parasite).